The chain runs to 182 residues: uncharacterized protein (182 aa).

Residues 151-172 are disordered; that stretch reads RGPGKPFADEKPCPRERPPADQ. The segment covering 157 to 169 has biased composition (basic and acidic residues); the sequence is FADEKPCPRERPP.

This is an uncharacterized protein from Mycobacterium tuberculosis (strain CDC 1551 / Oshkosh).